The sequence spans 309 residues: Zinc transporter ZIPB (309 aa).

At 1-22 (MNQPSSLAADLRGAWHAQAQSH) the chain is on the periplasmic side. The chain crosses the membrane as a helical span at residues 23 to 50 (PLITLGLAASAAGVVLLLVAGIVNALTG). The Extracellular segment spans residues 51–55 (ENRVH). A helical transmembrane segment spans residues 56–81 (VGYAVLGGAAGFAATALGALMALGLR). The Periplasmic segment spans residues 82–83 (AI). A helical transmembrane segment spans residues 84-119 (SARTQDAMLGFAAGMMLAASAFSLILPGLDAAGTIV). Aspartate 89 lines the Zn(2+) pocket. Position 99 (methionine 99) interacts with Cd(2+). At 120–121 (GP) the chain is on the extracellular side. Residues 122–145 (GPAAAAVVALGLGLGVLLMLGLDY) form a helical membrane-spanning segment. Aspartate 144 provides a ligand contact to Zn(2+). Aspartate 144 contributes to the Cd(2+) binding site. The Periplasmic portion of the chain corresponds to 146–165 (FTPHEHERTGHQGPEAARVN). A helical transmembrane segment spans residues 166 to 190 (RVWLFVLTIILHNLPEGMAIGVSFA). Histidine 177 is a Zn(2+) binding site. Positions 177, 178, and 181 each coordinate Cd(2+). Glutamate 181 serves as a coordination point for Zn(2+). Residues 191–192 (TG) are Extracellular-facing. Residues 193–222 (DLRIGLPLTSAIAIQDVPEGLAVALALRAV) form a helical membrane-spanning segment. Zn(2+) is bound at residue glutamine 207. Cd(2+)-binding residues include glutamine 207, aspartate 208, and glutamate 211. Glutamate 211 lines the Zn(2+) pocket. Over 223-224 (GL) the chain is Periplasmic. The chain crosses the membrane as a helical span at residues 225–251 (PIGRAVLVAVASGLMEPLGALVGVGIS). Residue glutamate 240 participates in Cd(2+) binding. The Extracellular segment spans residues 252–255 (SGFA). Residues 256–275 (LAYPISMGLAAGAMIFVVSH) traverse the membrane as a helical segment. Positions 275, 276, and 286 each coordinate Zn(2+). Histidine 275 is a binding site for Cd(2+). Topologically, residues 276 to 287 (EVIPETHRNGHE) are periplasmic. A helical membrane pass occupies residues 288–308 (TTATVGLMAGFALMMFLDTAL). Residue glycine 309 is a topological domain, extracellular.

Belongs to the ZIP transporter (TC 2.A.5) family. Homodimer. Also exists as a monomer.

The protein resides in the cell inner membrane. It catalyses the reaction Zn(2+)(in) = Zn(2+)(out). It carries out the reaction Cd(2+)(in) = Cd(2+)(out). Functionally, selective electrodiffusional channel that mediates the uptake of Zn(2+). Exploits in vivo zinc concentration gradients (maintained by cellular zinc homeostasis) to passively move zinc ions into the cytoplasm. ZIPB-mediated zinc flux is dependent upon pH, but independent of the proton motive force. Is also able to import Cd(2+), but is not permeable to Co(2+), Cu(2+), Fe(2+), Mn(2+) and Ni(2+). The sequence is that of Zinc transporter ZIPB from Bordetella bronchiseptica (strain ATCC BAA-588 / NCTC 13252 / RB50) (Alcaligenes bronchisepticus).